The chain runs to 312 residues: Olfactory receptor 5p57 (312 aa).

Topologically, residues 1–25 (MEPGNYTVVTEFILLGLTDDITVSV) are extracellular. A glycan (N-linked (GlcNAc...) asparagine) is linked at asparagine 5. A helical membrane pass occupies residues 26–46 (ILFVMFLIVYSVTLMGNLNII). Over 47 to 54 (VLIRTSPQ) the chain is Cytoplasmic. The helical transmembrane segment at 55 to 75 (LHTPMYLFLSHLAFLDIGYSS) threads the bilayer. Residues 76 to 99 (SVTPIMLRGFLRKGTFIPVAGCVA) lie on the Extracellular side of the membrane. A disulfide bridge connects residues cysteine 97 and cysteine 189. Residues 100-120 (QLCIVVAFGTSESFLLASMAY) form a helical membrane-spanning segment. The Cytoplasmic segment spans residues 121 to 133 (DRYVAICSPLLYS). The helical transmembrane segment at 134-154 (TQMSSTVCILLVGTSYLGGWV) threads the bilayer. Topologically, residues 155 to 196 (NAWIFTGCSLNLSFCGPNKINHFFCDYSPLLKLSCSHDFSFE) are extracellular. Asparagine 165 carries N-linked (GlcNAc...) asparagine glycosylation. A helical membrane pass occupies residues 197-217 (VIPAISSGSIIVVTVFIIALS). Residues 218–237 (YVYILVSILKMRSTEGRQKA) are Cytoplasmic-facing. The helical transmembrane segment at 238–258 (FSTCTSHLTAVTLFFGTITFI) threads the bilayer. Topologically, residues 259–271 (YVMPQSSYSTDQN) are extracellular. A helical membrane pass occupies residues 272-292 (KVVSVFYTVVIPMLNPLIYSF). Residues 293–312 (RNKEVKEAMKKLIAKTHWWS) are Cytoplasmic-facing.

This sequence belongs to the G-protein coupled receptor 1 family.

The protein localises to the cell membrane. In terms of biological role, probable odorant receptor, which recognizes only aliphatic alcohols, suggesting that it may convey a 'woody' or 'sweet' sour. This chain is Olfactory receptor 5p57, found in Mus musculus (Mouse).